The sequence spans 379 residues: Chaperone protein DnaJ (379 aa).

Residues 7–72 (CYYETLEVER…DKRAAYDRYG (66 aa)) form the J domain. The segment at 135–213 (GKTAQIEIPV…CTGSGRVTKE (79 aa)) adopts a CR-type zinc-finger fold. Positions 148, 151, 165, 168, 187, 190, 201, and 204 each coordinate Zn(2+). 4 CXXCXGXG motif repeats span residues 148–155 (CESCSGTG), 165–172 (CSTCGGAG), 187–194 (CPSCQGRG), and 201–208 (CPSCTGSG).

Belongs to the DnaJ family. As to quaternary structure, homodimer. It depends on Zn(2+) as a cofactor.

The protein resides in the cytoplasm. Participates actively in the response to hyperosmotic and heat shock by preventing the aggregation of stress-denatured proteins and by disaggregating proteins, also in an autonomous, DnaK-independent fashion. Unfolded proteins bind initially to DnaJ; upon interaction with the DnaJ-bound protein, DnaK hydrolyzes its bound ATP, resulting in the formation of a stable complex. GrpE releases ADP from DnaK; ATP binding to DnaK triggers the release of the substrate protein, thus completing the reaction cycle. Several rounds of ATP-dependent interactions between DnaJ, DnaK and GrpE are required for fully efficient folding. Also involved, together with DnaK and GrpE, in the DNA replication of plasmids through activation of initiation proteins. This is Chaperone protein DnaJ from Rhodopseudomonas palustris (strain HaA2).